A 214-amino-acid polypeptide reads, in one-letter code: Thiamine-phosphate synthase (214 aa).

4-amino-2-methyl-5-(diphosphooxymethyl)pyrimidine is bound by residues 37–41 and Asn-73; that span reads QYREK. The Mg(2+) site is built by Asp-74 and Asp-93. Ser-112 contributes to the 4-amino-2-methyl-5-(diphosphooxymethyl)pyrimidine binding site. 139-141 contributes to the 2-[(2R,5Z)-2-carboxy-4-methylthiazol-5(2H)-ylidene]ethyl phosphate binding site; that stretch reads TIS. Position 142 (Lys-142) interacts with 4-amino-2-methyl-5-(diphosphooxymethyl)pyrimidine. Residues Gly-171 and 191 to 192 contribute to the 2-[(2R,5Z)-2-carboxy-4-methylthiazol-5(2H)-ylidene]ethyl phosphate site; that span reads IS.

Belongs to the thiamine-phosphate synthase family. Mg(2+) serves as cofactor.

The enzyme catalyses 2-[(2R,5Z)-2-carboxy-4-methylthiazol-5(2H)-ylidene]ethyl phosphate + 4-amino-2-methyl-5-(diphosphooxymethyl)pyrimidine + 2 H(+) = thiamine phosphate + CO2 + diphosphate. It carries out the reaction 2-(2-carboxy-4-methylthiazol-5-yl)ethyl phosphate + 4-amino-2-methyl-5-(diphosphooxymethyl)pyrimidine + 2 H(+) = thiamine phosphate + CO2 + diphosphate. The catalysed reaction is 4-methyl-5-(2-phosphooxyethyl)-thiazole + 4-amino-2-methyl-5-(diphosphooxymethyl)pyrimidine + H(+) = thiamine phosphate + diphosphate. It functions in the pathway cofactor biosynthesis; thiamine diphosphate biosynthesis; thiamine phosphate from 4-amino-2-methyl-5-diphosphomethylpyrimidine and 4-methyl-5-(2-phosphoethyl)-thiazole: step 1/1. Its function is as follows. Condenses 4-methyl-5-(beta-hydroxyethyl)thiazole monophosphate (THZ-P) and 2-methyl-4-amino-5-hydroxymethyl pyrimidine pyrophosphate (HMP-PP) to form thiamine monophosphate (TMP). The sequence is that of Thiamine-phosphate synthase from Listeria monocytogenes serotype 4b (strain F2365).